A 303-amino-acid polypeptide reads, in one-letter code: Quinolinate synthase (303 aa).

Iminosuccinate contacts are provided by H24 and S41. Residue C86 participates in [4Fe-4S] cluster binding. Iminosuccinate contacts are provided by residues 112-114 (YIN) and S129. C172 serves as a coordination point for [4Fe-4S] cluster. Residues 198–200 (HPE) and T215 each bind iminosuccinate. C260 contacts [4Fe-4S] cluster.

This sequence belongs to the quinolinate synthase family. Type 2 subfamily. The cofactor is [4Fe-4S] cluster.

It localises to the cytoplasm. It catalyses the reaction iminosuccinate + dihydroxyacetone phosphate = quinolinate + phosphate + 2 H2O + H(+). It functions in the pathway cofactor biosynthesis; NAD(+) biosynthesis; quinolinate from iminoaspartate: step 1/1. In terms of biological role, catalyzes the condensation of iminoaspartate with dihydroxyacetone phosphate to form quinolinate. In Caldicellulosiruptor saccharolyticus (strain ATCC 43494 / DSM 8903 / Tp8T 6331), this protein is Quinolinate synthase.